The following is a 383-amino-acid chain: Putative type I specificity subunit S.MgeORF438P (383 aa).

The TRD1 stretch occupies residues 1-142; it reads MTPKLKLNNN…KELEIPFTSN (142 aa). The segment at 143 to 182 is conserved region 1; that stretch reads KNEQHAIANTLSVFDERLENLASLIEINRKLRDEYAHKLF. Positions 143-182 form a coiled coil; the sequence is KNEQHAIANTLSVFDERLENLASLIEINRKLRDEYAHKLF. The tract at residues 183-330 is TRD2; that stretch reads SLDEAFLSHW…GEIKVPYVKS (148 aa). Residues 331 to 370 form a conserved region 2 region; the sequence is FQLQRKAGKIVFLLDQKLDQYKKELSSLTVIRDTLLKKLF. Positions 331–370 form a coiled coil; it reads FQLQRKAGKIVFLLDQKLDQYKKELSSLTVIRDTLLKKLF.

The protein belongs to the type-I restriction system S methylase family.

Functionally, the specificity (S) subunit of a type I restriction enzyme; this subunit dictates DNA sequence specificity. This bacterium does not encode the associated endonuclease or methylase subunits. The polypeptide is Putative type I specificity subunit S.MgeORF438P (Mycoplasma genitalium (strain ATCC 33530 / DSM 19775 / NCTC 10195 / G37) (Mycoplasmoides genitalium)).